Here is a 471-residue protein sequence, read N- to C-terminus: O-acetyltransferase astG (471 aa).

It belongs to the fumigaclavine B O-acetyltransferase family. Monomer.

It carries out the reaction dideacetyl astellolide A + acetyl-CoA = 14-deacetyl astellolide A + CoA. It catalyses the reaction dideacetyl astellolide B + acetyl-CoA = 14-deacetyl astellolide B + CoA. The protein operates within secondary metabolite biosynthesis; terpenoid biosynthesis. O-acetyltransferase; part of the gene cluster that mediates the biosynthesis of astellolides, drimane-type sesquiterpene esters that show antimicrobial, anti-inflammatory, and anti-tumor activities. The first step in astellolide biosynthesis is performed by the sesquiterpene cyclase astC that catalyzes the formation of drimanyl pyrophosphate from farnesyl pyrophosphate. Drimanyl pyrophosphate is then dephosphorylated by the sesquiterpene phosphatase astI to produce drimanyl monophosphate which is further dephosphorylated to drim-8-ene-11-ol by atsK. Drim-8-ene-11-ol is converted to confertifolin, probably by the cytochrome P450 monooxygenase astD and/or the dehydrogenase astE. The cytochrome P450 monooxygenases astB, astF and astJ then hydroxylate confertifolin at C6, C14, or C15 to form trihydroxy confertifolin. The nonribosomal peptide synthetase astA catalyzes ester bond formation between trihydroxy contifolin and benzoic acid (BA) or 4-hydroxy benzoic acid (4HBA), leading to the formation of dideacetyl astellolides A and B, respectively. Finally, the O-acetyltransferase astG converts dideacetyl astellolides A and B into deacetyl astellolides A and B. The polypeptide is O-acetyltransferase astG (Aspergillus oryzae (strain ATCC 42149 / RIB 40) (Yellow koji mold)).